We begin with the raw amino-acid sequence, 414 residues long: MSGIIATYLIHDDSHNLEKKAEQIALGLTIGSWTHLPHLLQEQLKQHKGNVIHVEELAEHEHTNSYLRKKVKRGIIKIEYPLLNFSPDLPAILTTTFGKLSLDGEVKLIDLTFSDELKKHFPGPKFGIDGIRNLLQVHDRPLLMSIFKGMIGRNIGYLKTQLRDQAIGGVDIVKDDEILFENALTPLTKRIVSGKEVLQSVYETYGHKTLYAVNLTGRTFDLKENAKRAVQAGADILLFNVFAYGLDVLQSLAEDDEIPVPIMAHPAVSGAYSASKLYGVSSPLLLGKLLRYAGADFSLFPSPYGSVALEKEEALAISKYLTEDDAFFKKSFSVPSAGIHPGFVPFIVRDFGKDVVINAGGGIHGHPNGAQGGGKAFRTAIDATLQNKPLHEVDDINLHSALQIWGNPSYEVKL.

Catalysis depends on lysine 99, which acts as the Proton acceptor. Residues lysine 148, 174–177 (KDDE), histidine 265, glycine 338, and 360–361 (GG) contribute to the substrate site. 3 residues coordinate Mg(2+): lysine 174, aspartate 176, and glutamate 177. Lysine 174 carries the N6-carboxylysine modification.

The protein belongs to the RuBisCO large chain family. Type IV subfamily. In terms of assembly, homodimer. Requires Mg(2+) as cofactor.

The enzyme catalyses 5-methylsulfanyl-2,3-dioxopentyl phosphate = 2-hydroxy-5-methylsulfanyl-3-oxopent-1-enyl phosphate. The protein operates within amino-acid biosynthesis; L-methionine biosynthesis via salvage pathway; L-methionine from S-methyl-5-thio-alpha-D-ribose 1-phosphate: step 3/6. Its function is as follows. Catalyzes the enolization of 2,3-diketo-5-methylthiopentyl-1-phosphate (DK-MTP-1-P) into 2-hydroxy-3-keto-5-methylthiopentenyl-1-phosphate (HK-MTPenyl-1-P). The protein is 2,3-diketo-5-methylthiopentyl-1-phosphate enolase of Bacillus cereus (strain B4264).